Consider the following 297-residue polypeptide: Acetylglutamate kinase (297 aa).

Substrate-binding positions include 70–71, R92, and N194; that span reads GG.

It belongs to the acetylglutamate kinase family. ArgB subfamily.

Its subcellular location is the cytoplasm. The catalysed reaction is N-acetyl-L-glutamate + ATP = N-acetyl-L-glutamyl 5-phosphate + ADP. Its pathway is amino-acid biosynthesis; L-arginine biosynthesis; N(2)-acetyl-L-ornithine from L-glutamate: step 2/4. Functionally, catalyzes the ATP-dependent phosphorylation of N-acetyl-L-glutamate. The sequence is that of Acetylglutamate kinase from Janthinobacterium sp. (strain Marseille) (Minibacterium massiliensis).